A 269-amino-acid polypeptide reads, in one-letter code: Aquaporin-1 (269 aa).

Topologically, residues 1–11 are cytoplasmic; sequence MASEIKKKLFW. A helical membrane pass occupies residues 12–29; it reads RAVVAEFLAMTLFVFISI. The Extracellular segment spans residues 30–46; it reads GSALGFNYPLERNQTLV. The N-linked (GlcNAc...) asparagine glycan is linked to N42. Residues 47–65 form a helical membrane-spanning segment; it reads QDNVKVSLAFGLSIATLAQ. Over 66–68 the chain is Cytoplasmic; it reads SVG. An intramembrane segment occupies 69–82; the sequence is HISGAHLNPAVTLG. An NPA 1 motif is present at residues 76-78; it reads NPA. At 83-90 the chain is on the cytoplasmic side; that stretch reads LLLSCQIS. The chain crosses the membrane as a helical span at residues 91-109; sequence ILRAVMYIIAQCVGAIVAS. Residues 110–133 lie on the Extracellular side of the membrane; sequence AILSGITSSLLENSLGRNDLARGV. A helical transmembrane segment spans residues 134 to 153; that stretch reads NSGQGLGIEIIGTLQLVLCV. The Cytoplasmic portion of the chain corresponds to 154–163; sequence LATTDRRRRD. A helical transmembrane segment spans residues 164 to 181; that stretch reads LGGSAPLAIGLSVALGHL. Over 182-186 the chain is Extracellular; it reads LAIDY. The stretch at 187-199 is an intramembrane region; that stretch reads TGCGINPARSFGS. The short motif at 192–194 is the NPA 2 element; that stretch reads NPA. Over 200-206 the chain is Extracellular; the sequence is AVLTRNF. N-linked (GlcNAc...) asparagine glycosylation occurs at N205. The helical transmembrane segment at 207-224 threads the bilayer; it reads SNHWIFWVGPFIGSALAV. Residues 225-269 are Cytoplasmic-facing; it reads LIYDFILAPRSSDFTDRMKVWTSGQVEEYDLDADDINSRVEMKPK. Phosphoserine is present on S247. Y253 is modified (phosphotyrosine). Phosphoserine is present on S262.

This sequence belongs to the MIP/aquaporin (TC 1.A.8) family. As to quaternary structure, homotetramer; each monomer provides an independent water pore. Component of the ankyrin-1 complex in the erythrocyte, composed of ANK1, RHCE, RHAG, SLC4A1, EPB42, GYPA, GYPB and AQP1. Interacts with EPHB2; involved in endolymph production in the inner ear. Identified in a complex with STOM. Interacts (via the N-terminal) with ANK1 (via ANK 1-5 repeats). Interacts (via the C-terminal) with EPB42. Erythrocytes and renal tubules.

Its subcellular location is the cell membrane. The enzyme catalyses H2O(in) = H2O(out). The catalysed reaction is nitric oxide(out) = nitric oxide(in). It catalyses the reaction CO2(out) = CO2(in). It carries out the reaction glycerol(in) = glycerol(out). The enzyme catalyses H2O2(out) = H2O2(in). The catalysed reaction is K(+)(in) = K(+)(out). It catalyses the reaction Na(+)(in) = Na(+)(out). Its function is as follows. Forms a water channel that facilitates the transport of water across cell membranes, playing a crucial role in water homeostasis in various tissues. Could also be permeable to small solutes including hydrogen peroxide, glycerol and gases such as amonnia (NH3), nitric oxide (NO) and carbon dioxide (CO2). Recruited to the ankyrin-1 complex, a multiprotein complex of the erythrocyte membrane, it could be part of a CO2 metabolon, linking facilitated diffusion of CO2 across the membrane, anion exchange of Cl(-)/HCO3(-) and interconversion of dissolved CO2 and carbonic acid in the cytosol. In vitro, it shows non-selective gated cation channel activity and may be permeable to cations like K(+) and Na(+) in vivo. This Rattus norvegicus (Rat) protein is Aquaporin-1.